The chain runs to 187 residues: MSVADDILNDLHGGIANTLDDLRRELASVRTGRASLHLLDGVRVDYYGTSTPLNQVATLSVPEARLIMVKPWEKNLIPVIEKAIRDANLGVNPQSDKDLVRVPIPPLTEERRKEIVKQVKHKGEDHKVAIRNQRRDAKELIEVAEKDGDIAADDAKKALDKMQKETDEGVKKVDEIVAAKEKEVMQV.

Belongs to the RRF family.

It localises to the cytoplasm. Responsible for the release of ribosomes from messenger RNA at the termination of protein biosynthesis. May increase the efficiency of translation by recycling ribosomes from one round of translation to another. This chain is Ribosome-recycling factor, found in Anaeromyxobacter sp. (strain Fw109-5).